Here is a 461-residue protein sequence, read N- to C-terminus: Chromosomal replication initiator protein DnaA (461 aa).

A domain I, interacts with DnaA modulators region spans residues 1–68; it reads MINAWAQIEH…EKAAASVLGS (68 aa). Residues 68 to 118 are domain II; it reads SVPTITVVSGEEPAAAPRPVQVPAQKRPAAARTSGAEQMGLPLHYASRSAD. A domain III, AAA+ region region spans residues 119-336; that stretch reads SIKWMHSFDE…SCLRNLLLKA (218 aa). ATP-binding residues include glycine 162, glycine 164, lysine 165, and threonine 166. The domain IV, binds dsDNA stretch occupies residues 337-461; sequence RLLNQQITMD…VERNGRIIHP (125 aa).

This sequence belongs to the DnaA family. In terms of assembly, oligomerizes as a right-handed, spiral filament on DNA at oriC.

Its subcellular location is the cytoplasm. In terms of biological role, plays an essential role in the initiation and regulation of chromosomal replication. ATP-DnaA binds to the origin of replication (oriC) to initiate formation of the DNA replication initiation complex once per cell cycle. Binds the DnaA box (a 9 base pair repeat at the origin) and separates the double-stranded (ds)DNA. Forms a right-handed helical filament on oriC DNA; dsDNA binds to the exterior of the filament while single-stranded (ss)DNA is stabiized in the filament's interior. The ATP-DnaA-oriC complex binds and stabilizes one strand of the AT-rich DNA unwinding element (DUE), permitting loading of DNA polymerase. After initiation quickly degrades to an ADP-DnaA complex that is not apt for DNA replication. Binds acidic phospholipids. The chain is Chromosomal replication initiator protein DnaA from Oleidesulfovibrio alaskensis (strain ATCC BAA-1058 / DSM 17464 / G20) (Desulfovibrio alaskensis).